Consider the following 574-residue polypeptide: Septation ring formation regulator EzrA (574 aa).

Residues 1 to 7 lie on the Extracellular side of the membrane; that stretch reads MSSGIVL. The chain crosses the membrane as a helical span at residues 8–26; the sequence is LIVAIVLVVIIAYLIAIII. Over 27–574 the chain is Cytoplasmic; the sequence is RKRNDSLITK…YEKTRETIRF (548 aa). Coiled coils occupy residues 102 to 141, 255 to 368, and 409 to 495; these read NFIRAHSQINNIESQLNLAEEDIKAIREALAVLKEQEEKN, KNIE…KDVL, and LKNI…EETA.

Belongs to the EzrA family.

It is found in the cell membrane. In terms of biological role, negative regulator of FtsZ ring formation; modulates the frequency and position of FtsZ ring formation. Inhibits FtsZ ring formation at polar sites. Interacts either with FtsZ or with one of its binding partners to promote depolymerization. The polypeptide is Septation ring formation regulator EzrA (Streptococcus mutans serotype c (strain ATCC 700610 / UA159)).